Reading from the N-terminus, the 105-residue chain is Small ribosomal subunit protein uS10 (105 aa).

This sequence belongs to the universal ribosomal protein uS10 family. Part of the 30S ribosomal subunit.

Functionally, involved in the binding of tRNA to the ribosomes. The chain is Small ribosomal subunit protein uS10 from Rickettsia peacockii (strain Rustic).